A 175-amino-acid polypeptide reads, in one-letter code: NADH-quinone oxidoreductase subunit I (175 aa).

4Fe-4S ferredoxin-type domains are found at residues 69–98 (KRDE…IEAA) and 115–144 (KKFE…LDGP). 8 residues coordinate [4Fe-4S] cluster: C78, C81, C84, C88, C124, C127, C130, and C134.

It belongs to the complex I 23 kDa subunit family. NDH-1 is composed of 14 different subunits. Subunits NuoA, H, J, K, L, M, N constitute the membrane sector of the complex. [4Fe-4S] cluster is required as a cofactor.

The protein localises to the cell inner membrane. The catalysed reaction is a quinone + NADH + 5 H(+)(in) = a quinol + NAD(+) + 4 H(+)(out). In terms of biological role, NDH-1 shuttles electrons from NADH, via FMN and iron-sulfur (Fe-S) centers, to quinones in the respiratory chain. The immediate electron acceptor for the enzyme in this species is believed to be ubiquinone. Couples the redox reaction to proton translocation (for every two electrons transferred, four hydrogen ions are translocated across the cytoplasmic membrane), and thus conserves the redox energy in a proton gradient. The sequence is that of NADH-quinone oxidoreductase subunit I from Leptospira interrogans serogroup Icterohaemorrhagiae serovar Lai (strain 56601).